A 670-amino-acid chain; its full sequence is Pescadillo homolog (670 aa).

The stretch at 292-321 (GANQAQAKVKEAESKRSLMEEELLKVRELF) forms a coiled coil. The BRCT domain maps to 316–402 (KVRELFRGLT…QMLPVTGYRI (87 aa)). Positions 643–670 (RQRAEAKGKKLKEKKADNPYKKLPKWVQ) are disordered. Basic and acidic residues predominate over residues 644–662 (QRAEAKGKKLKEKKADNPY).

Belongs to the pescadillo family.

Its subcellular location is the nucleus. The protein resides in the nucleolus. It is found in the nucleoplasm. Its function is as follows. Required for maturation of ribosomal RNAs and formation of the large ribosomal subunit. The polypeptide is Pescadillo homolog (Leishmania braziliensis).